The sequence spans 602 residues: UvrABC system protein C (602 aa).

A GIY-YIG domain is found at 17 to 94 (KTSGCYKMYS…IKKYKPTYNI (78 aa)). A UVR domain is found at 199–234 (SKLLNDIEIKMKEVIMKENFEAAIKLKETKKSLIEI).

This sequence belongs to the UvrC family. Interacts with UvrB in an incision complex.

The protein localises to the cytoplasm. Functionally, the UvrABC repair system catalyzes the recognition and processing of DNA lesions. UvrC both incises the 5' and 3' sides of the lesion. The N-terminal half is responsible for the 3' incision and the C-terminal half is responsible for the 5' incision. In Borrelia duttonii (strain Ly), this protein is UvrABC system protein C.